The following is a 370-amino-acid chain: Anhydro-N-acetylmuramic acid kinase (370 aa).

Position 13–20 (13–20) interacts with ATP; sequence GTSMDGVD.

Belongs to the anhydro-N-acetylmuramic acid kinase family.

It carries out the reaction 1,6-anhydro-N-acetyl-beta-muramate + ATP + H2O = N-acetyl-D-muramate 6-phosphate + ADP + H(+). It participates in amino-sugar metabolism; 1,6-anhydro-N-acetylmuramate degradation. Its pathway is cell wall biogenesis; peptidoglycan recycling. In terms of biological role, catalyzes the specific phosphorylation of 1,6-anhydro-N-acetylmuramic acid (anhMurNAc) with the simultaneous cleavage of the 1,6-anhydro ring, generating MurNAc-6-P. Is required for the utilization of anhMurNAc either imported from the medium or derived from its own cell wall murein, and thus plays a role in cell wall recycling. In Vibrio vulnificus (strain CMCP6), this protein is Anhydro-N-acetylmuramic acid kinase.